A 323-amino-acid chain; its full sequence is Deaminated glutathione amidase (323 aa).

Residues methionine 1 to threonine 33 constitute a mitochondrion transit peptide. In terms of domain architecture, CN hydrolase spans leucine 42–leucine 294. Catalysis depends on glutamate 82, which acts as the Proton acceptor. Lysine 157 serves as the catalytic Proton donor. The active-site Nucleophile is cysteine 199.

Belongs to the carbon-nitrogen hydrolase superfamily. NIT1/NIT2 family. Expressed in most tissues with higher expression in adult liver and kidney as well as in fetal adrenal gland and skeletal muscle.

Its subcellular location is the mitochondrion. The protein localises to the cytoplasm. The catalysed reaction is N-(4-oxoglutaryl)-L-cysteinylglycine + H2O = L-cysteinylglycine + 2-oxoglutarate. It carries out the reaction N-(4-carboxy-4-oxobutanoyl)-L-ethylglycylglycine + H2O = N-(2-aminobutanoyl)glycine + 2-oxoglutarate. Its function is as follows. Catalyzes the hydrolysis of the amide bond in N-(4-oxoglutarate)-L-cysteinylglycine (deaminated glutathione), a metabolite repair reaction to dispose of the harmful deaminated glutathione. Possesses amidase activity toward deaminated ophthalmate in vitro. Plays a role in cell growth and apoptosis: loss of expression promotes cell growth, resistance to DNA damage stress and increased incidence to NMBA-induced tumors. Has tumor suppressor properties that enhances the apoptotic responsiveness in cancer cells; this effect is additive to the tumor suppressor activity of FHIT. It is also a negative regulator of primary T-cells. The polypeptide is Deaminated glutathione amidase (Mus musculus (Mouse)).